The following is a 309-amino-acid chain: Calcium homeostasis modulator protein 5 (309 aa).

The Cytoplasmic segment spans residues 1-15 (MDAFQGILKFFLNQK). Residues lysine 15, arginine 32, and valine 37 each contribute to the a 1,2-diacyl-sn-glycero-3-phosphate site. The chain crosses the membrane as a helical span at residues 16-37 (TVIGYSFMALLTVGSERLFSVV). The Extracellular portion of the chain corresponds to 38–45 (AFKCPCST). 3 disulfides stabilise this stretch: cysteine 41-cysteine 127, cysteine 43-cysteine 158, and cysteine 142-cysteine 149. The chain crosses the membrane as a helical span at residues 46-70 (ENMTYGLVFLFAPAWVLLILGFFLN). Over 71–99 (NRSWRLFTGCCVNPRKIFPRGHSCRFFYV) the chain is Cytoplasmic. A helical transmembrane segment spans residues 100 to 129 (LGQITLSSLVAPVMWLSVALLNGTFYECAM). Residues glutamine 102 and asparagine 121 each coordinate a 1,2-diacyl-sn-glycero-3-phosphate. At 130-174 (SGTRSSGLLELICKGKPKECWEELHKVSCGKTSMLPTVNEELKLS) the chain is on the extracellular side. Residues 175 to 200 (LQAQSQILGWCLICSASFFSLLTTCY) form a helical membrane-spanning segment. At 201–309 (ARCRSKVSYL…MVLVGTAHNM (109 aa)) the chain is on the cytoplasmic side. Arginine 202 is an a 1,2-diacyl-sn-glycero-3-phosphate binding site.

It belongs to the CALHM family. As to quaternary structure, oligomerizes to form undecameric cone-shaped channels.

It localises to the membrane. In terms of biological role, may assemble to form large pore channels with gating and ion conductance likely regulated by membrane lipids. This Homo sapiens (Human) protein is Calcium homeostasis modulator protein 5.